The sequence spans 134 residues: Lymphocyte antigen 6 complex locus protein G6d (134 aa).

Positions 1-19 (MNSQLIGILFSALLGAALG) are cleaved as a signal peptide. Positions 22–121 (MRCYDCGGGP…ASSSTPLCIL (100 aa)) constitute a UPAR/Ly6 domain. Intrachain disulfides connect Cys-24/Cys-48, Cys-27/Cys-35, Cys-42/Cys-76, Cys-82/Cys-101, and Cys-102/Cys-107. Residue Thr-68 is glycosylated (O-linked (GalNAc...) threonine). Asn-108 carries GPI-anchor amidated asparagine lipidation. A propeptide spans 109–134 (GAVASSSTPLCILAAVTTLAWLLSGQ) (removed in mature form).

Homodimer. O-glycosylated.

The protein resides in the cell membrane. The sequence is that of Lymphocyte antigen 6 complex locus protein G6d (Ly6g6d) from Rattus norvegicus (Rat).